A 192-amino-acid polypeptide reads, in one-letter code: Orotate phosphoribosyltransferase (192 aa).

116 to 124 (EDIVTTGLS) lines the 5-phospho-alpha-D-ribose 1-diphosphate pocket. Orotate-binding residues include T120 and R148.

The protein belongs to the purine/pyrimidine phosphoribosyltransferase family. PyrE subfamily. Homodimer. Requires Mg(2+) as cofactor.

The catalysed reaction is orotidine 5'-phosphate + diphosphate = orotate + 5-phospho-alpha-D-ribose 1-diphosphate. It participates in pyrimidine metabolism; UMP biosynthesis via de novo pathway; UMP from orotate: step 1/2. In terms of biological role, catalyzes the transfer of a ribosyl phosphate group from 5-phosphoribose 1-diphosphate to orotate, leading to the formation of orotidine monophosphate (OMP). The sequence is that of Orotate phosphoribosyltransferase from Brucella anthropi (strain ATCC 49188 / DSM 6882 / CCUG 24695 / JCM 21032 / LMG 3331 / NBRC 15819 / NCTC 12168 / Alc 37) (Ochrobactrum anthropi).